The sequence spans 205 residues: Arginine exporter protein ArgO (205 aa).

6 helical membrane-spanning segments follow: residues 1–21, 42–62, 67–87, 111–131, 147–167, and 185–205; these read MLAV…PLGP, LCAL…SALL, LLLA…GWGA, ILVT…DTFV, WFAL…AFLA, and LFVG…GFGL.

Belongs to the LysE/ArgO transporter (TC 2.A.75) family.

The protein localises to the cell inner membrane. The enzyme catalyses L-arginine(in) = L-arginine(out). Involved in the export of arginine. Important to control the intracellular level of arginine and the correct balance between arginine and lysine. This chain is Arginine exporter protein ArgO, found in Yersinia pseudotuberculosis serotype O:3 (strain YPIII).